The primary structure comprises 710 residues: Bifunctional lysine-specific demethylase and histidyl-hydroxylase NO66 (710 aa).

The interval 103–137 (TDEMNKTKKKQKKIMKKEIRKRTKRKRKSVNKREL) is disordered. Residues 109-132 (TKKKQKKIMKKEIRKRTKRKRKSV) are compositionally biased toward basic residues. Residues 359-506 (CSIQLTNPQS…DLLERVIPPA (148 aa)) enclose the JmjC domain. 3 residues coordinate Fe cation: His-405, Asp-407, and His-472.

It belongs to the ROX family. NO66 subfamily. Requires Fe(2+) as cofactor.

It is found in the nucleus. It carries out the reaction N(6),N(6)-dimethyl-L-lysyl(36)-[histone H3] + 2 2-oxoglutarate + 2 O2 = L-lysyl(36)-[histone H3] + 2 formaldehyde + 2 succinate + 2 CO2. Oxygenase that can act as both a histone lysine demethylase and a ribosomal histidine hydroxylase. Specifically demethylates 'Lys-4' (H3K4me) and 'Lys-36' (H3K36me) of histone H3, thereby playing a central role in histone code. The polypeptide is Bifunctional lysine-specific demethylase and histidyl-hydroxylase NO66 (Brugia malayi (Filarial nematode worm)).